We begin with the raw amino-acid sequence, 243 residues long: Phosphoribosylaminoimidazole-succinocarboxamide synthase (243 aa).

This sequence belongs to the SAICAR synthetase family.

It catalyses the reaction 5-amino-1-(5-phospho-D-ribosyl)imidazole-4-carboxylate + L-aspartate + ATP = (2S)-2-[5-amino-1-(5-phospho-beta-D-ribosyl)imidazole-4-carboxamido]succinate + ADP + phosphate + 2 H(+). The protein operates within purine metabolism; IMP biosynthesis via de novo pathway; 5-amino-1-(5-phospho-D-ribosyl)imidazole-4-carboxamide from 5-amino-1-(5-phospho-D-ribosyl)imidazole-4-carboxylate: step 1/2. This Lactiplantibacillus plantarum (strain ATCC BAA-793 / NCIMB 8826 / WCFS1) (Lactobacillus plantarum) protein is Phosphoribosylaminoimidazole-succinocarboxamide synthase.